Here is a 224-residue protein sequence, read N- to C-terminus: Deoxyribose-phosphate aldolase (224 aa).

D91 (proton donor/acceptor) is an active-site residue. The Schiff-base intermediate with acetaldehyde role is filled by K152. The active-site Proton donor/acceptor is K181.

It belongs to the DeoC/FbaB aldolase family. DeoC type 1 subfamily.

The protein resides in the cytoplasm. It carries out the reaction 2-deoxy-D-ribose 5-phosphate = D-glyceraldehyde 3-phosphate + acetaldehyde. The protein operates within carbohydrate degradation; 2-deoxy-D-ribose 1-phosphate degradation; D-glyceraldehyde 3-phosphate and acetaldehyde from 2-deoxy-alpha-D-ribose 1-phosphate: step 2/2. In terms of biological role, catalyzes a reversible aldol reaction between acetaldehyde and D-glyceraldehyde 3-phosphate to generate 2-deoxy-D-ribose 5-phosphate. This Mycoplasma pneumoniae (strain ATCC 29342 / M129 / Subtype 1) (Mycoplasmoides pneumoniae) protein is Deoxyribose-phosphate aldolase.